The chain runs to 330 residues: Aspartate--ammonia ligase (330 aa).

This sequence belongs to the class-II aminoacyl-tRNA synthetase family. AsnA subfamily.

It localises to the cytoplasm. It carries out the reaction L-aspartate + NH4(+) + ATP = L-asparagine + AMP + diphosphate + H(+). Its pathway is amino-acid biosynthesis; L-asparagine biosynthesis; L-asparagine from L-aspartate (ammonia route): step 1/1. This is Aspartate--ammonia ligase from Klebsiella pneumoniae subsp. pneumoniae (strain ATCC 700721 / MGH 78578).